The primary structure comprises 279 residues: NAD kinase (279 aa).

The active-site Proton acceptor is Asp61. NAD(+)-binding positions include 61–62 (DG), 138–139 (ND), Lys149, Lys166, Asp168, and 179–184 (TGYSFS).

This sequence belongs to the NAD kinase family. The cofactor is a divalent metal cation.

It localises to the cytoplasm. It carries out the reaction NAD(+) + ATP = ADP + NADP(+) + H(+). Its function is as follows. Involved in the regulation of the intracellular balance of NAD and NADP, and is a key enzyme in the biosynthesis of NADP. Catalyzes specifically the phosphorylation on 2'-hydroxyl of the adenosine moiety of NAD to yield NADP. The polypeptide is NAD kinase (Borreliella burgdorferi (strain ATCC 35210 / DSM 4680 / CIP 102532 / B31) (Borrelia burgdorferi)).